Consider the following 843-residue polypeptide: uncharacterized protein (843 aa).

The zn(2)-C6 fungal-type DNA-binding region spans cysteine 15 to cysteine 42.

The protein resides in the nucleus. Required for growth on non-fermentable carbon sources. This is an uncharacterized protein from Saccharomyces cerevisiae (strain ATCC 204508 / S288c) (Baker's yeast).